Consider the following 213-residue polypeptide: Small ribosomal subunit protein uS3 (213 aa).

Residues 38–106 (IRKYVKEKIF…EFALEVSEIR (69 aa)) enclose the KH type-2 domain.

Belongs to the universal ribosomal protein uS3 family. Part of the 30S ribosomal subunit. Forms a tight complex with proteins S10 and S14.

Binds the lower part of the 30S subunit head. Binds mRNA in the 70S ribosome, positioning it for translation. The protein is Small ribosomal subunit protein uS3 of Maridesulfovibrio salexigens (strain ATCC 14822 / DSM 2638 / NCIMB 8403 / VKM B-1763) (Desulfovibrio salexigens).